A 216-amino-acid chain; its full sequence is MGNRDDEYDYLFKVVLIGDSGVGKSNLLSRFTRNEFNLESKSTIGVEFATRSIQVDGKTIKAQIWDTAGQERYRAITSAYYRGAVGALLVYDIAKHLTYENVERWLKELRDHADSNIVIMLVGNKSDLRHLRAVPTDEARAFAEKNGLSFIETSALDSTNVEAAFQTILTEIYRIVSQKQMSDRRENDMSPSNNVVPIHVPPTTENKPKMQCCQNI.

Glycine 2 carries the N-acetylglycine modification. GTP contacts are provided by serine 20, glycine 21, valine 22, glycine 23, lysine 24, serine 25, asparagine 26, asparagine 37, leucine 38, serine 40, serine 42, and threonine 43. Serine 25 contacts Mg(2+). Residues 36-47 (FNLESKSTIGVE) carry the Switch 1 motif. Residues threonine 43 and aspartate 66 each coordinate Mg(2+). A Switch 2 motif is present at residues 67–86 (TAGQERYRAITSAYYRGAVG). GTP is bound by residues glycine 69, asparagine 124, lysine 125, aspartate 127, alanine 155, and leucine 156. Residues 183-208 (DRRENDMSPSNNVVPIHVPPTTENKP) form a disordered region. Residues cysteine 212 and cysteine 213 are each lipidated (S-geranylgeranyl cysteine). Cysteine 213 carries the post-translational modification Cysteine methyl ester. A propeptide spans 214-216 (QNI) (removed in mature form).

Belongs to the small GTPase superfamily. Rab family. The cofactor is Mg(2+).

It localises to the cell membrane. The protein resides in the endosome membrane. Its subcellular location is the recycling endosome membrane. It is found in the cleavage furrow. The protein localises to the cytoplasmic vesicle. It localises to the phagosome. The protein resides in the cytoplasmic vesicle membrane. Its subcellular location is the golgi apparatus. It is found in the trans-Golgi network. It carries out the reaction GTP + H2O = GDP + phosphate + H(+). Its activity is regulated as follows. Regulated by guanine nucleotide exchange factors (GEFs) which promote the exchange of bound GDP for free GTP. Regulated by GTPase activating proteins (GAPs) which increase the GTP hydrolysis activity. Inhibited by GDP dissociation inhibitors (GDIs) which prevent Rab-GDP dissociation. In terms of biological role, the small GTPases Rab are key regulators of intracellular membrane trafficking, from the formation of transport vesicles to their fusion with membranes. Rabs cycle between an inactive GDP-bound form and an active GTP-bound form that is able to recruit to membranes different set of downstream effectors directly responsible for vesicle formation, movement, tethering and fusion. The small Rab GTPase RAB11A regulates endocytic recycling. May also be involved in the regulation of preciliary trafficking and neosynthesized protein export. The chain is Ras-related protein Rab-11A (RAB11A) from Gallus gallus (Chicken).